Reading from the N-terminus, the 907-residue chain is MPRQRAPKEEEAELLTKQERSTRSSEDASDASVSSISTTSLVLEHINNPAINGTSRSRRGEKYTDEDDEAQEAFDVEDGRYKAPVAVDKKTRRWLWIVGIACVTGWALALVFFLMSGSYKHVSTRPHDPLASSTKGSGKKITMDDVFGGSFYAQQQSVKWIAGPNGEDGLLLEKNTGNAGYLVVEDIRNKGDGDSSAKKTKLMQKSSFDVDGKLVRPNEVWPSKDFKKVLVQSDFEKNWRHSGTGKYWIFDVATQTGEPLDPENQDGRVQLASLSPQSDAVVFTRDNNMYLRKLDSKEVIQITRDGGSELFYGIPDWVYEEEVFQGNSATWWSEDGKYIAFLRTDESTVPTYPVQYFVSRPSGNKPKAGEENYPEVRNIKYPKAGAPNPIVALQFYDVEKAEVFSVEIEDDFRDNNRLITEIVWAGKTKQVLVRETNRESDILKVVLMDVEKRTGKTVRTENVAELDGGWFEVSQKTTFVPADPDNGRKDDGYIDTIIHEGYDHIGYFTPLDNDKPVLLSQGEWEVVDAPSRVDLKNNMVYYVSTEKSSMERHAYSVFLNGTGTSEVVENSGSGYYEASFSAGGSYALITYQGPGIPWQKIISTPSNKDKFEKVLEENKHLDRFVREREMPILNYQTIDVDGFKLNVLERRPPHFNEKKKYPVLFYQYSGPNSQEVNKKFHVDFQAYVAANLGYIVVTVDGRGTGFLGRKLRCITRGNLGYYEAHDQIAAAKIWASKKYVDADRLAIWGWSFGGFNTLKTLEQDGGQTFKYGMAVAPVTDWRYYDSIYTERFMHMPQNNAAGYDNSTITDVASLAKNTRFLIMHGVADDNVHMQNTLTLLDRLDLAGVENYDVHVFPDSDHSIYFHNANRIVYDKLRWWLINAFNGEWAKIKTAEPKSQVDARLERR.

The span at 1-26 (MPRQRAPKEEEAELLTKQERSTRSSE) shows a compositional bias: basic and acidic residues. A disordered region spans residues 1 to 70 (MPRQRAPKEE…EKYTDEDDEA (70 aa)). The Cytoplasmic portion of the chain corresponds to 1 to 93 (MPRQRAPKEE…PVAVDKKTRR (93 aa)). Over residues 30-44 (DASVSSISTTSLVLE) the composition is skewed to low complexity. A helical; Signal-anchor for type II membrane protein membrane pass occupies residues 94–114 (WLWIVGIACVTGWALALVFFL). Residues 115–907 (MSGSYKHVST…SQVDARLERR (793 aa)) are Vacuolar-facing. Residue Asn560 is glycosylated (N-linked (GlcNAc...) asparagine). Residue Ser751 is the Charge relay system of the active site. An N-linked (GlcNAc...) asparagine glycan is attached at Asn805. Catalysis depends on charge relay system residues Asp828 and His861.

The protein belongs to the peptidase S9B family.

The protein localises to the vacuole membrane. The catalysed reaction is Release of an N-terminal dipeptide, Xaa-Yaa-|-Zaa-, from a polypeptide, preferentially when Yaa is Pro, provided Zaa is neither Pro nor hydroxyproline.. Its function is as follows. Type IV dipeptidyl-peptidase which removes N-terminal dipeptides sequentially from polypeptides having unsubstituted N-termini provided that the penultimate residue is proline. This is Probable dipeptidyl-aminopeptidase B (dapB) from Pyrenophora teres f. teres (strain 0-1) (Barley net blotch fungus).